The following is a 181-amino-acid chain: Ribosome maturation factor RimM (181 aa).

One can recognise a PRC barrel domain in the interval 97–170; the sequence is AGEFWLPDLM…RIEVVAIPGL (74 aa).

Belongs to the RimM family. Binds ribosomal protein uS19.

It localises to the cytoplasm. An accessory protein needed during the final step in the assembly of 30S ribosomal subunit, possibly for assembly of the head region. Essential for efficient processing of 16S rRNA. May be needed both before and after RbfA during the maturation of 16S rRNA. It has affinity for free ribosomal 30S subunits but not for 70S ribosomes. The polypeptide is Ribosome maturation factor RimM (Gloeobacter violaceus (strain ATCC 29082 / PCC 7421)).